A 408-amino-acid chain; its full sequence is Tryptophan synthase beta chain (408 aa).

The residue at position 97 (K97) is an N6-(pyridoxal phosphate)lysine.

It belongs to the TrpB family. As to quaternary structure, tetramer of two alpha and two beta chains. The cofactor is pyridoxal 5'-phosphate.

It carries out the reaction (1S,2R)-1-C-(indol-3-yl)glycerol 3-phosphate + L-serine = D-glyceraldehyde 3-phosphate + L-tryptophan + H2O. It participates in amino-acid biosynthesis; L-tryptophan biosynthesis; L-tryptophan from chorismate: step 5/5. In terms of biological role, the beta subunit is responsible for the synthesis of L-tryptophan from indole and L-serine. The polypeptide is Tryptophan synthase beta chain (trpB) (Pseudomonas syringae pv. syringae).